We begin with the raw amino-acid sequence, 994 residues long: Seizure protein 6 homolog (994 aa).

Positions 1-19 are cleaved as a signal peptide; the sequence is MRPVALLLLPSLLALLAHG. The Extracellular segment spans residues 20–925; sequence LSLEAPTVGK…AASSTLDAAH (906 aa). The disordered stretch occupies residues 28 to 50; that stretch reads GKGQAPGIEETDGELTAAPTPEQ. O-glycosylated at two sites regions lie at residues 38–47 and 59–63; these read TDGELTAAPT and TTAPT. Disordered regions lie at residues 88–146, 171–191, and 241–261; these read LRPA…ESES, IAST…PGDM, and PGPC…PTDL. The span at 93–107 shows a compositional bias: pro residues; that stretch reads PFQPDPPAPFTPSPL. 2 stretches are compositionally biased toward polar residues: residues 112 to 123 and 172 to 185; these read NQDSRPVFTSPT and ASTT…TPTQ. An N-linked (GlcNAc...) asparagine glycan is attached at asparagine 289. The Sushi 1 domain maps to 355 to 414; sequence LSCHFPRRPAYGDVTVTSLHPGGSARFHCATGYQLKGARHLTCLNATQPFWDSKEPVCIA. 12 disulfides stabilise this stretch: cysteine 357–cysteine 397, cysteine 383–cysteine 412, cysteine 416–cysteine 443, cysteine 532–cysteine 574, cysteine 559–cysteine 589, cysteine 593–cysteine 619, cysteine 710–cysteine 752, cysteine 738–cysteine 765, cysteine 771–cysteine 813, cysteine 799–cysteine 830, cysteine 838–cysteine 880, and cysteine 866–cysteine 895. 3 N-linked (GlcNAc...) asparagine glycosylation sites follow: asparagine 399, asparagine 436, and asparagine 541. A CUB 1 domain is found at 416–527; it reads CGGVIRNATT…AGMALRYEAF (112 aa). Residues 530 to 591 form the Sushi 2 domain; the sequence is GHCYEPFVKY…WNETEPACRA (62 aa). A CUB 2 domain is found at 593–704; it reads CSGEITDSAG…QGFVIHFFEV (112 aa). Sushi domains lie at 708–767, 769–832, and 836–897; these read DTCP…SCQR, TSCH…KCLL, and KPCH…ICRA. The helical transmembrane segment at 926 to 946 threads the bilayer; the sequence is IAAAIFLPLVAMVLLVGGVYF. Residues 947-994 are Cytoplasmic-facing; that stretch reads YFSRLQGKSSLQLPRPRPRPYNRITIESAFDNPTYETGSLSFAGDERI.

This sequence belongs to the SEZ6 family. In terms of processing, glycosylated.

The protein localises to the cell membrane. Its function is as follows. May play a role in cell-cell recognition and in neuronal membrane signaling. Seems to be important for the achievement of the necessary balance between dendrite elongation and branching during the elaboration of a complex dendritic arbor. Involved in the development of appropriate excitatory synaptic connectivity. This chain is Seizure protein 6 homolog (SEZ6), found in Homo sapiens (Human).